The sequence spans 227 residues: Phosphatidylserine decarboxylase proenzyme (227 aa).

Catalysis depends on serine 181, which acts as the Schiff-base intermediate with substrate; via pyruvic acid. A Pyruvic acid (Ser); by autocatalysis modification is found at serine 181.

It belongs to the phosphatidylserine decarboxylase family. PSD-A subfamily. As to quaternary structure, heterodimer of a large membrane-associated beta subunit and a small pyruvoyl-containing alpha subunit. Pyruvate is required as a cofactor. Is synthesized initially as an inactive proenzyme. Formation of the active enzyme involves a self-maturation process in which the active site pyruvoyl group is generated from an internal serine residue via an autocatalytic post-translational modification. Two non-identical subunits are generated from the proenzyme in this reaction, and the pyruvate is formed at the N-terminus of the alpha chain, which is derived from the carboxyl end of the proenzyme. The post-translation cleavage follows an unusual pathway, termed non-hydrolytic serinolysis, in which the side chain hydroxyl group of the serine supplies its oxygen atom to form the C-terminus of the beta chain, while the remainder of the serine residue undergoes an oxidative deamination to produce ammonia and the pyruvoyl prosthetic group on the alpha chain.

The protein localises to the cell membrane. It catalyses the reaction a 1,2-diacyl-sn-glycero-3-phospho-L-serine + H(+) = a 1,2-diacyl-sn-glycero-3-phosphoethanolamine + CO2. It participates in phospholipid metabolism; phosphatidylethanolamine biosynthesis; phosphatidylethanolamine from CDP-diacylglycerol: step 2/2. Functionally, catalyzes the formation of phosphatidylethanolamine (PtdEtn) from phosphatidylserine (PtdSer). In Anaplasma phagocytophilum (strain HZ), this protein is Phosphatidylserine decarboxylase proenzyme.